A 341-amino-acid polypeptide reads, in one-letter code: MQNLTVALDAMGGDFGPRVTVPAAVQALSHFPELKVILVGDQHQITQQLSLLGYSADTRLSIVHSDRVISNSEKPSLALRHSAGSSMGMAIDLVAENQADACVSGGNTGALMALSRFRLKLLPGIDRPALVSALPTISGRKTWMLDLGANVSSDADSLFQFAVMGAALAEQHLQQAPRVAILNIGAEEIKGNDLVKRCAEMLTQTQAINFIGYIEGNQLLTDAADVIVCDGFVGNVCLKACEGTAQLFIDKLKKSLLASSIKGWIARKLFSELFTELKTLNPDQYNGASLLGLRGIVIKSHGSADVSAVVNAISEAVHEVKRQVPSRISDRLEAVLLERHY.

It belongs to the PlsX family. In terms of assembly, homodimer. Probably interacts with PlsY.

Its subcellular location is the cytoplasm. The catalysed reaction is a fatty acyl-[ACP] + phosphate = an acyl phosphate + holo-[ACP]. The protein operates within lipid metabolism; phospholipid metabolism. Functionally, catalyzes the reversible formation of acyl-phosphate (acyl-PO(4)) from acyl-[acyl-carrier-protein] (acyl-ACP). This enzyme utilizes acyl-ACP as fatty acyl donor, but not acyl-CoA. The polypeptide is Phosphate acyltransferase (Vibrio cholerae serotype O1 (strain ATCC 39541 / Classical Ogawa 395 / O395)).